Here is a 157-residue protein sequence, read N- to C-terminus: MPSVESFELDHNAVVAPYVRHCGVHKVGTDGVVNKFDIRFCQPNKQAMKPDTIHTLEHLLAFTIRTHSEKYDHFDIIDISPMGCQTGYYLVVSGEPTAEEIVDLLDATLKEAIDITEIPAANEKQCGQAKLHDLEGAKRLMRFWLSQDKEDLLKVFG.

Histidine 54, histidine 58, and cysteine 126 together coordinate Fe cation.

The protein belongs to the LuxS family. In terms of assembly, homodimer. Requires Fe cation as cofactor.

The enzyme catalyses S-(5-deoxy-D-ribos-5-yl)-L-homocysteine = (S)-4,5-dihydroxypentane-2,3-dione + L-homocysteine. Involved in the synthesis of autoinducer 2 (AI-2) which is secreted by bacteria and is used to communicate both the cell density and the metabolic potential of the environment. The regulation of gene expression in response to changes in cell density is called quorum sensing. Catalyzes the transformation of S-ribosylhomocysteine (RHC) to homocysteine (HC) and 4,5-dihydroxy-2,3-pentadione (DPD). This Bacillus velezensis (strain DSM 23117 / BGSC 10A6 / LMG 26770 / FZB42) (Bacillus amyloliquefaciens subsp. plantarum) protein is S-ribosylhomocysteine lyase.